The following is a 306-amino-acid chain: Homeobox protein HMX3 (306 aa).

Residues 95-181 (HTPRTEVPDK…DKKPCRKKKT (87 aa)) form a disordered region. Composition is skewed to basic and acidic residues over residues 117–143 (GERD…KSPE) and 153–174 (EEGK…PDKK). The segment at residues 178–237 (KKKTRTVFSRSQVFQLESTFDMKRYLSSSERAGLAASLHLTETQVKIWFQNRRNKWKRQL) is a DNA-binding region (homeobox).

It belongs to the HMX homeobox family.

It localises to the nucleus. Its function is as follows. Transcription factor involved in specification of neuronal cell types and which is required for inner ear and hypothalamus development. Binds to the 5'-CAAGTG-3' core sequence. May act as a stage-specific inhibitor of anf1 in the anterior neural plate during the development. The polypeptide is Homeobox protein HMX3 (hmx3) (Xenopus tropicalis (Western clawed frog)).